The sequence spans 156 residues: Small ribosomal subunit protein uS7 (156 aa).

This sequence belongs to the universal ribosomal protein uS7 family. Part of the 30S ribosomal subunit. Contacts proteins S9 and S11.

Functionally, one of the primary rRNA binding proteins, it binds directly to 16S rRNA where it nucleates assembly of the head domain of the 30S subunit. Is located at the subunit interface close to the decoding center, probably blocks exit of the E-site tRNA. This is Small ribosomal subunit protein uS7 from Bartonella quintana (strain Toulouse) (Rochalimaea quintana).